Reading from the N-terminus, the 522-residue chain is Target of rapamycin complex 2 subunit MAPKAP1 (522 aa).

N-acetylalanine is present on Ala-2. An interaction with MAP3K2 region spans residues 2-184 (AFLDNPTIIL…KKIDVYLPLH (183 aa)). Positions 2–267 (AFLDNPTIIL…GFSTLALVEK (266 aa)) are interaction with NBN. The residue at position 86 (Thr-86) is a Phosphothreonine. Phosphoserine is present on residues Ser-128, Ser-186, Ser-315, and Ser-356. In terms of domain architecture, CRIM spans 139–267 (QSILSVRLEQ…GFSTLALVEK (129 aa)). Positions 279-353 (LFVRINAAHG…QSAWEFCQVR (75 aa)) are SIN1-type RBD. The 106-residue stretch at 382–487 (HYKSFKVSMI…IVLKVNYILE (106 aa)) folds into the SIN1-type PH domain. Arg-393 contributes to the a 1,2-diacyl-sn-glycero-3-phospho-(1D-myo-inositol-3,4,5-trisphosphate) binding site. Residue Thr-398 is modified to Phosphothreonine. Residues Lys-428 and Lys-464 each contribute to the a 1,2-diacyl-sn-glycero-3-phospho-(1D-myo-inositol-3,4,5-trisphosphate) site. The tract at residues 468–522 (FESDAATVNEIVLKVNYILESRASTARADYFAQKQRKLNRRTSFSFQKEKKSGQQ) is interaction with ATF2. Phosphoserine is present on Ser-510.

This sequence belongs to the SIN1 family. In terms of assembly, component of the mechanistic target of rapamycin complex 2 (mTORC2), consisting in two heterotretramers composed of MTOR, MLST8, RICTOR and MAPKAP1/SIN1. The mTORC2 core complex associates with PRR5/PROTOR1 and/or PRR5L/PROTOR2. Contrary to mTORC1, mTORC2 does not bind to and is not sensitive to FKBP12-rapamycin. Interacts with MAP3K2. Interacts with ATF2. Interacts with MAPK8. Interacts with GTP-bound HRAS and KRAS; inhibiting their activity. Interacts with IFNAR2. In terms of processing, phosphorylation at Ser-128 by PKC promotes relocalization to the perinuclear region, where the mTORC2 complex specifically mediates phosphorylation of SGK1. Phosphorylated at Thr-86 by AKT1 or RPS6KB1 in the presence of growth factors; the effect of this phosphorylation is however unclear. According to two studies, phosphorylation at Thr-86 by AKT1 is part of a positive feedback loop that increases mTORC2 activation. According to another study, phosphorylation at Thr-86 and Thr-398 by RPS6KB1 promotes dissociation from the mTORC2 complex, leading to inhibit mTORC2 signaling.

The protein localises to the cell membrane. It localises to the endoplasmic reticulum membrane. The protein resides in the early endosome membrane. It is found in the late endosome membrane. Its subcellular location is the lysosome membrane. The protein localises to the golgi apparatus membrane. It localises to the mitochondrion outer membrane. The protein resides in the cytoplasm. It is found in the perinuclear region. Its subcellular location is the nucleus. With respect to regulation, phosphatidylinositol 3,4,5-trisphosphate (PI(3,4,5)P3) promotes MTOR activation by relieving MAPKAP1/SIN1-mediated inhibition of MTOR that takes place in absence of PI(3,4,5)P3. In terms of biological role, component of the mechanistic target of rapamycin complex 2 (mTORC2), which transduces signals from growth factors to pathways involved in proliferation, cytoskeletal organization, lipogenesis and anabolic output. In response to growth factors, mTORC2 phosphorylates and activates AGC protein kinase family members, including AKT (AKT1, AKT2 and AKT3), PKC (PRKCA, PRKCB and PRKCE) and SGK1. In contrast to mTORC1, mTORC2 is nutrient-insensitive. Within the mTORC2 complex, MAPKAP1/SIN1 acts as a substrate adapter which recognizes and binds AGC protein kinase family members for phosphorylation by MTOR. mTORC2 plays a critical role in AKT1 activation by mediating phosphorylation of different sites depending on the context, such as 'Thr-450', 'Ser-473', 'Ser-477' or 'Thr-479', facilitating the phosphorylation of the activation loop of AKT1 on 'Thr-308' by PDPK1/PDK1 which is a prerequisite for full activation. mTORC2 catalyzes the phosphorylation of SGK1 at 'Ser-422' and of PRKCA on 'Ser-657'. The mTORC2 complex also phosphorylates various proteins involved in insulin signaling, such as FBXW8 and IGF2BP1. mTORC2 acts upstream of Rho GTPases to regulate the actin cytoskeleton, probably by activating one or more Rho-type guanine nucleotide exchange factors. mTORC2 promotes the serum-induced formation of stress-fibers or F-actin. MAPKAP1 inhibits MAP3K2 by preventing its dimerization and autophosphorylation. Inhibits HRAS and KRAS independently of mTORC2 complex. Enhances osmotic stress-induced phosphorylation of ATF2 and ATF2-mediated transcription. Involved in ciliogenesis, regulates cilia length through its interaction with CCDC28B independently of mTORC2 complex. The protein is Target of rapamycin complex 2 subunit MAPKAP1 (MAPKAP1) of Pongo abelii (Sumatran orangutan).